Consider the following 1112-residue polypeptide: MTLTSPPRTRADSRYSWVPAAAGWTVGVIATLSLIASVSPLVRWIIRVPREFVDDYIFNFPDTSFAWAFVLALLAGALAARKRIAWWILLLYMVAAAGWNVADLLTGDESVVDEMGEVIGLAFHLAAVAFLLLARPLFWARVRRGALFKAAGVLAAGMAVGVLVGWGLLELFPGDLERDYRLAYAANRVFAFAGVDPDAFDGQHPHVVVNALLGLFGALALMAAAIVLFQSQRSENALTGEDESAIRGLLELYGKNDSLGYFATRRDKSVVFAPNGRAAITYRVEVGVCLASGDPVGDPKAWPQAIDAWLALCGTYGWAPGVMGASVGGAEAFRAAGLSAIQLGDEAILLPDSFRLSGPDMRAVRQAVTRARRAGVTVRIRRHRELSPEQMAEVIAHADAWRDTETERGFSMALGRLGDPADSDCLLVEAVQGGNGGQERSDPGDGTVVAMLSLVPWGSNGASLDVMRRSPQSPNGTIELMVSELCMQAEDIGVTRISLNFAMFRSAFEQGAQLGAGPVARLWRWLLVFFSRWWQLETLYRSNMKYQPQWVPRYACYEDARLIPRVGVASVIAEGFLVLPFSRRNKQHTGHHTSAPQDLVASGVLHHDGTAPDMSGLRTDTADDEPPRLPEQVRVRMAKLKALQADGVDAYPVGRPPSHTAAAAVDSPDDVELDVAGRVLRIRDYGGVLFAQLRDWSGEVQLLLDNSTLEQGSTADFTAAIDLGDLIAATGTMGYSKNGTRSLLVRHWRLTGKCLRPLPDKWKGLTDQEARVRARYVDLAVNTEARDLIRARSGVLHAIRDTLYHKGFLEVETPILQQIHGGANARPFLTHINAYDLDLYLRIAPELYLKRLCVGGVERVFELGRAFRNEGVDFSHNPEFTLLEAYQAHADYHVWIDGCRELIQNAAMAANGEHVFLRPRDDGVLEPVDISGPWTVKTVHEAVSEALGEHIDAATELPTLRKLADAAGIPYLTHWDEGAVVLEMYEHLVEDRTQKPTFYKDFPTSVSPLTRPHRSIAGVAERWDLVAWGVELGTAYSELTDPVEQRRRLQAQSLLAAGGDPEAMELDEDFLQAMEYAMPPTGGLGMGVDRVVMLITGRSIRETLPFPLARPR.

The phosphatidylglycerol lysyltransferase stretch occupies residues 1-613 (MTLTSPPRTR…VLHHDGTAPD (613 aa)). A run of 7 helical transmembrane segments spans residues 18 to 38 (VPAAAGWTVGVIATLSLIASV), 60 to 80 (FPDTSFAWAFVLALLAGALAA), 84 to 104 (IAWWILLLYMVAAAGWNVADL), 118 to 138 (VIGLAFHLAAVAFLLLARPLF), 152 to 172 (GVLAAGMAVGVLVGWGLLELF), 209 to 229 (VNALLGLFGALALMAAAIVLF), and 308 to 328 (AWLALCGTYGWAPGVMGASVG). A lysine--tRNA ligase region spans residues 614–1112 (MSGLRTDTAD…TLPFPLARPR (499 aa)). The OB DNA-binding region spans 675–748 (VAGRVLRIRD…GTRSLLVRHW (74 aa)). Asp1024 and Glu1031 together coordinate Mg(2+).

This sequence in the N-terminal section; belongs to the LPG synthetase family. In the C-terminal section; belongs to the class-II aminoacyl-tRNA synthetase family. The cofactor is Mg(2+).

The protein localises to the cell membrane. The catalysed reaction is tRNA(Lys) + L-lysine + ATP = L-lysyl-tRNA(Lys) + AMP + diphosphate. It catalyses the reaction L-lysyl-tRNA(Lys) + a 1,2-diacyl-sn-glycero-3-phospho-(1'-sn-glycerol) = a 1,2-diacyl-sn-glycero-3-phospho-1'-(3'-O-L-lysyl)-sn-glycerol + tRNA(Lys). Functionally, catalyzes the production of L-lysyl-tRNA(Lys)transfer and the transfer of a lysyl group from L-lysyl-tRNA(Lys) to membrane-bound phosphatidylglycerol (PG), which produces lysylphosphatidylglycerol (LPG), one of the components of the bacterial membrane with a positive net charge. LPG synthesis contributes to the resistance to cationic antimicrobial peptides (CAMPs) and likely protects M.tuberculosis against the CAMPs produced by competiting microorganisms (bacteriocins). In fact, the modification of anionic phosphatidylglycerol with positively charged L-lysine results in repulsion of the peptides. This Mycobacterium sp. (strain KMS) protein is Lysylphosphatidylglycerol biosynthesis bifunctional protein LysX (lysX).